The sequence spans 788 residues: Endonuclease MutS2 (788 aa).

332–339 is a binding site for ATP; the sequence is GPNTGGKT. In terms of domain architecture, Smr spans 713–788; that stretch reads VDLRGMDAEE…GTGVTVVELK (76 aa).

It belongs to the DNA mismatch repair MutS family. MutS2 subfamily. As to quaternary structure, homodimer. Binds to stalled ribosomes, contacting rRNA.

In terms of biological role, endonuclease that is involved in the suppression of homologous recombination and thus may have a key role in the control of bacterial genetic diversity. Acts as a ribosome collision sensor, splitting the ribosome into its 2 subunits. Detects stalled/collided 70S ribosomes which it binds and splits by an ATP-hydrolysis driven conformational change. Acts upstream of the ribosome quality control system (RQC), a ribosome-associated complex that mediates the extraction of incompletely synthesized nascent chains from stalled ribosomes and their subsequent degradation. Probably generates substrates for RQC. The sequence is that of Endonuclease MutS2 from Clostridium botulinum (strain Langeland / NCTC 10281 / Type F).